We begin with the raw amino-acid sequence, 790 residues long: Penicillin-binding protein 1A (790 aa).

At 1–6 the chain is on the cytoplasmic side; the sequence is MYKSLL. Residues 7 to 27 traverse the membrane as a helical; Signal-anchor for type II membrane protein segment; it reads FCLKIFVFLILVGCGITAYII. Over 28–790 the chain is Periplasmic; the sequence is YHYSRDLPDY…SKEDQSQEIY (763 aa). The transglycosylase stretch occupies residues 49–220; that stretch reads TRIYSRDGKL…SELNPERNYA (172 aa). E87 serves as the catalytic Proton donor; for transglycosylase activity. The segment at 398–711 is transpeptidase; the sequence is DVIVVEAIKE…SNVVLPIFID (314 aa). S457 serves as the catalytic Acyl-ester intermediate; for transpeptidase activity.

This sequence in the N-terminal section; belongs to the glycosyltransferase 51 family. In the C-terminal section; belongs to the transpeptidase family.

It is found in the cell inner membrane. It carries out the reaction [GlcNAc-(1-&gt;4)-Mur2Ac(oyl-L-Ala-gamma-D-Glu-L-Lys-D-Ala-D-Ala)](n)-di-trans,octa-cis-undecaprenyl diphosphate + beta-D-GlcNAc-(1-&gt;4)-Mur2Ac(oyl-L-Ala-gamma-D-Glu-L-Lys-D-Ala-D-Ala)-di-trans,octa-cis-undecaprenyl diphosphate = [GlcNAc-(1-&gt;4)-Mur2Ac(oyl-L-Ala-gamma-D-Glu-L-Lys-D-Ala-D-Ala)](n+1)-di-trans,octa-cis-undecaprenyl diphosphate + di-trans,octa-cis-undecaprenyl diphosphate + H(+). It catalyses the reaction Preferential cleavage: (Ac)2-L-Lys-D-Ala-|-D-Ala. Also transpeptidation of peptidyl-alanyl moieties that are N-acyl substituents of D-alanine.. The protein operates within cell wall biogenesis; peptidoglycan biosynthesis. Its function is as follows. Cell wall formation. Synthesis of cross-linked peptidoglycan from the lipid intermediates. The enzyme has a penicillin-insensitive transglycosylase N-terminal domain (formation of linear glycan strands) and a penicillin-sensitive transpeptidase C-terminal domain (cross-linking of the peptide subunits). This Rickettsia conorii (strain ATCC VR-613 / Malish 7) protein is Penicillin-binding protein 1A (mrcA).